The sequence spans 203 residues: dITP/XTP pyrophosphatase (203 aa).

Residue 8–13 coordinates substrate; the sequence is SNNAGK. Residues Asp-40 and Asp-69 each coordinate Mg(2+). Asp-69 acts as the Proton acceptor in catalysis. Substrate-binding positions include Ser-70, 152 to 155, Lys-175, and 180 to 181; these read FGYD and HR.

This sequence belongs to the HAM1 NTPase family. In terms of assembly, homodimer. Requires Mg(2+) as cofactor.

The catalysed reaction is XTP + H2O = XMP + diphosphate + H(+). It catalyses the reaction dITP + H2O = dIMP + diphosphate + H(+). The enzyme catalyses ITP + H2O = IMP + diphosphate + H(+). Functionally, pyrophosphatase that catalyzes the hydrolysis of nucleoside triphosphates to their monophosphate derivatives, with a high preference for the non-canonical purine nucleotides XTP (xanthosine triphosphate), dITP (deoxyinosine triphosphate) and ITP. Seems to function as a house-cleaning enzyme that removes non-canonical purine nucleotides from the nucleotide pool, thus preventing their incorporation into DNA/RNA and avoiding chromosomal lesions. This chain is dITP/XTP pyrophosphatase, found in Nitrosomonas europaea (strain ATCC 19718 / CIP 103999 / KCTC 2705 / NBRC 14298).